Consider the following 470-residue polypeptide: Neuraminidase (470 aa).

Residues 1–6 lie on the Intravirion side of the membrane; it reads MNPNQK. The chain crosses the membrane as a helical span at residues 7-27; sequence IICISATGMTLSVVSLLIGIA. The involved in apical transport and lipid raft association stretch occupies residues 11-33; that stretch reads SATGMTLSVVSLLIGIANLGLNI. At 28 to 470 the chain is on the virion surface side; it reads NLGLNIGLHY…HDGAEIIYFK (443 aa). Positions 36-88 are hypervariable stalk region; the sequence is HYKVGDTPGVNVPNENGTNSTTTIINNNTQNNFTNITNIIQTKTEEKTFLNLT. 6 N-linked (GlcNAc...) asparagine; by host glycosylation sites follow: asparagine 51, asparagine 54, asparagine 62, asparagine 67, asparagine 70, and asparagine 86. The head of neuraminidase stretch occupies residues 91–470; the sequence is LCEVNSWHIL…HDGAEIIYFK (380 aa). 8 disulfides stabilise this stretch: cysteine 92–cysteine 419, cysteine 124–cysteine 129, cysteine 184–cysteine 231, cysteine 233–cysteine 238, cysteine 279–cysteine 292, cysteine 281–cysteine 290, cysteine 319–cysteine 337, and cysteine 423–cysteine 449. Position 118 (arginine 118) interacts with substrate. The N-linked (GlcNAc...) asparagine; by host glycan is linked to asparagine 146. Residue aspartate 151 is the Proton donor/acceptor of the active site. Arginine 152 is a binding site for substrate. An N-linked (GlcNAc...) asparagine; by host glycan is attached at asparagine 201. A substrate-binding site is contributed by 277 to 278; it reads EE. Arginine 293 is a binding site for substrate. Positions 294, 298, and 325 each coordinate Ca(2+). Residue arginine 372 participates in substrate binding. Asparagine 402 carries an N-linked (GlcNAc...) asparagine; by host glycan. Residue tyrosine 406 is the Nucleophile of the active site.

Belongs to the glycosyl hydrolase 34 family. Homotetramer. Ca(2+) is required as a cofactor. Post-translationally, N-glycosylated.

It is found in the virion membrane. Its subcellular location is the host apical cell membrane. The catalysed reaction is Hydrolysis of alpha-(2-&gt;3)-, alpha-(2-&gt;6)-, alpha-(2-&gt;8)- glycosidic linkages of terminal sialic acid residues in oligosaccharides, glycoproteins, glycolipids, colominic acid and synthetic substrates.. Its activity is regulated as follows. Inhibited by the neuraminidase inhibitors zanamivir (Relenza) and oseltamivir (Tamiflu). These drugs interfere with the release of progeny virus from infected cells and are effective against all influenza strains. Resistance to neuraminidase inhibitors is quite rare. In terms of biological role, catalyzes the removal of terminal sialic acid residues from viral and cellular glycoconjugates. Cleaves off the terminal sialic acids on the glycosylated HA during virus budding to facilitate virus release. Additionally helps virus spread through the circulation by further removing sialic acids from the cell surface. These cleavages prevent self-aggregation and ensure the efficient spread of the progeny virus from cell to cell. Otherwise, infection would be limited to one round of replication. Described as a receptor-destroying enzyme because it cleaves a terminal sialic acid from the cellular receptors. May facilitate viral invasion of the upper airways by cleaving the sialic acid moieties on the mucin of the airway epithelial cells. Likely to plays a role in the budding process through its association with lipid rafts during intracellular transport. May additionally display a raft-association independent effect on budding. Plays a role in the determination of host range restriction on replication and virulence. Sialidase activity in late endosome/lysosome traffic seems to enhance virus replication. The sequence is that of Neuraminidase from Aves (Pig).